A 133-amino-acid chain; its full sequence is Putative HTH-type transcriptional regulator YwnA (133 aa).

The HTH rrf2-type domain occupies 1-130; that stretch reads MINSRLAVAI…ASKSLKDVMN (130 aa). The H-T-H motif DNA-binding region spans 24–47; sequence SEIIADSVNTNPVVVRRMISLLKK.

The protein is Putative HTH-type transcriptional regulator YwnA (ywnA) of Bacillus subtilis (strain 168).